The chain runs to 172 residues: Xanthine-guanine phosphoribosyltransferase (172 aa).

5-phospho-alpha-D-ribose 1-diphosphate is bound by residues 47 to 48 (RG) and 106 to 114 (DDLVDTGKT). Asp107 is a binding site for Mg(2+). Guanine-binding residues include Asp110 and Ile153. Asp110 and Ile153 together coordinate xanthine. GMP-binding positions include 110–114 (DTGKT) and 152–153 (WI).

This sequence belongs to the purine/pyrimidine phosphoribosyltransferase family. XGPT subfamily. Homotetramer. The cofactor is Mg(2+).

It is found in the cell inner membrane. It catalyses the reaction GMP + diphosphate = guanine + 5-phospho-alpha-D-ribose 1-diphosphate. The enzyme catalyses XMP + diphosphate = xanthine + 5-phospho-alpha-D-ribose 1-diphosphate. It carries out the reaction IMP + diphosphate = hypoxanthine + 5-phospho-alpha-D-ribose 1-diphosphate. It participates in purine metabolism; GMP biosynthesis via salvage pathway; GMP from guanine: step 1/1. The protein operates within purine metabolism; XMP biosynthesis via salvage pathway; XMP from xanthine: step 1/1. In terms of biological role, purine salvage pathway enzyme that catalyzes the transfer of the ribosyl-5-phosphate group from 5-phospho-alpha-D-ribose 1-diphosphate (PRPP) to the N9 position of the 6-oxopurines guanine and xanthine to form the corresponding ribonucleotides GMP (guanosine 5'-monophosphate) and XMP (xanthosine 5'-monophosphate), with the release of PPi. To a lesser extent, also acts on hypoxanthine. In Rhodopseudomonas palustris (strain HaA2), this protein is Xanthine-guanine phosphoribosyltransferase.